The following is a 193-amino-acid chain: HMG-Y-related protein A (193 aa).

The region spanning 11 to 81 (PIPPYPEMIL…LKNNYFRAGA (71 aa)) is the H15 domain. A disordered region spans residues 75-193 (NYFRAGAPDA…PAVPSETAAA (119 aa)). Positions 86–92 (PKRGRGR) match the Nuclear localization signal 1 (NLS) motif. 4 DNA-binding regions (a.T hook) span residues 87–98 (KRGRGRPPKARD), 113–124 (GRGRGRPPKAKS), 138–149 (PKPRGRPPKKAK), and 173–184 (KRGRGRPPKVRP). Positions 145-149 (PKKAK) match the Nuclear localization signal 2 (NLS) motif.

The protein belongs to the histone H1/H5 family. Phosphorylated by CDK, this phosphorylation prevents DNA-binding. Motility is increased when hypophosphorylated. Post-translationally, acetylated.

Its subcellular location is the nucleus. It localises to the nucleolus. In terms of biological role, binds A/T-rich DNA (e.g. present in the storage gamma-zein gene promoter) with a highly dynamic distribution into the nucleus. Probably involved in endosperm development, during cells shift from a mitotic cycle to endoreduplication leading to massive synthesis of storage proteins (zeins) and starch. The protein is HMG-Y-related protein A of Zea mays (Maize).